The following is a 308-amino-acid chain: UPF0282 protein SSO3251 (308 aa).

The protein belongs to the UPF0282 family.

This chain is UPF0282 protein SSO3251, found in Saccharolobus solfataricus (strain ATCC 35092 / DSM 1617 / JCM 11322 / P2) (Sulfolobus solfataricus).